The chain runs to 472 residues: MMPRTIIEKIWDQHVIKKGEGKPDLLYIDLHLIHEVTSPQAFEGLRQKNRKVRRPQNTFATMDHNIPTVNRFEIKDDVAKRQVSALERNCEEFGIRLADLSSVDQGIVHVIGPELGLTLPGKTIVCGDSHTSTHGAFGALAFGIGTSEVEHVLSTQTLWQQKPKTLEIRVDGKLQKGVTAKDVILAIIGKYGVKFGAGYVIEYTGEVFRNMSMDERMTVCNMSIEAGARAGLIAPDETTFEYVKTKKYAPKGEDFEKAVEEWKNLKTDPGAVYDRTIVMDGSAISPMVTWGINPGMVLPVDETIPGPEAFLQEDDKKEAQRAYEYMGLEPYKKIEDITIEHVFIGSCTNSRMTDLRQAAEMIKGQKVADGVRAIVVPGSQSVKIQAEKEGLHKIFIEAGFEWRESGCSMCLSMNNDVVPEGERCASTSNRNFEGRQGKGARTHLVSPAMAAMAAIHGRFVDVRKYYQETTAV.

3 residues coordinate [4Fe-4S] cluster: cysteine 347, cysteine 407, and cysteine 410.

Belongs to the aconitase/IPM isomerase family. LeuC type 1 subfamily. In terms of assembly, heterodimer of LeuC and LeuD. [4Fe-4S] cluster serves as cofactor.

The enzyme catalyses (2R,3S)-3-isopropylmalate = (2S)-2-isopropylmalate. Its pathway is amino-acid biosynthesis; L-leucine biosynthesis; L-leucine from 3-methyl-2-oxobutanoate: step 2/4. Its function is as follows. Catalyzes the isomerization between 2-isopropylmalate and 3-isopropylmalate, via the formation of 2-isopropylmaleate. This chain is 3-isopropylmalate dehydratase large subunit, found in Bacillus licheniformis (strain ATCC 14580 / DSM 13 / JCM 2505 / CCUG 7422 / NBRC 12200 / NCIMB 9375 / NCTC 10341 / NRRL NRS-1264 / Gibson 46).